Consider the following 261-residue polypeptide: Undecaprenyl-diphosphatase (261 aa).

8 helical membrane passes run threonine 16–phenylalanine 36, glycine 40–tryptophan 60, phenylalanine 82–isoleucine 102, leucine 107–alanine 127, isoleucine 140–valine 160, phenylalanine 183–methionine 203, serine 211–isoleucine 231, and phenylalanine 239–leucine 259.

This sequence belongs to the UppP family.

The protein localises to the cell membrane. It catalyses the reaction di-trans,octa-cis-undecaprenyl diphosphate + H2O = di-trans,octa-cis-undecaprenyl phosphate + phosphate + H(+). Its function is as follows. Catalyzes the dephosphorylation of undecaprenyl diphosphate (UPP). Confers resistance to bacitracin. This is Undecaprenyl-diphosphatase from Desulforudis audaxviator (strain MP104C).